The following is a 1486-amino-acid chain: MIERGKFRSLTLINWNGFFARTFDLDELVTTLSGGNGAGKSTTMAAFVTALIPDLTLLHFRNTTEAGATSGSRDKGLHGKLKAGVCYSMLDTINSRHQRVVVGVRLQQVAGRDRKVDIKPFAIQGLPMSVQPTQLVTETLNERQARVLPLNELKDKLEAMEGVQFKQFNSITDYHSLMFDLGIIARRLRSASDRSKFYRLIEASLYGGISSAITRSLRDYLLPENSGVRKAFQDMEAALRENRMTLEAIRVTQSDRDLFKHLISEATNYVAADYMRHANERRVHLDKALEFRRELHTSRQQLAAEQYKHVDMARELAEHNGAEGDLEADYQAASDHLNLVQTALRQQEKIERYEADLDELQIRLEEQNEVVAEAIERQEENEARAEAAELEVDELKSQLADYQQALDVQQTRAIQYNQAIAALNRAKELCHLPDLTADSAAEWLETFQAKELEATEKMLSLEQKMSMAQTAHSQFEQAYQLVVAINGPLARNEAWDVARELLREGVDQRHLAEQVQPLRMRLSELEQRLREQQEAERLLADFCKRQGKNFDIDELEALHQELEARIASLSDSVSNAREERMALRQEQEQLQSRIQSLMQRAPVWLAAQNSLNQLSEQCGEEFTSSQDVTEYLQQLLEREREAIVERDEVGARKNAVDEEIERLSQPGGSEDQRLNALAERFGGVLLSEIYDDVSLEDAPYFSALYGPSRHAIVVPDLSQVTEHLDGLTDCPEDLYLIEGDPQSFDDSVFSVDELEKAVVVKIADRQWRYSRFPEVPLFGRAARESRIESLHAEREVLSERFATLSFDVQKTQRLHQAFSRFIGSHLAVVFESDPEAEIRQLNSRRVELERALSNHENDNQQQRIQFEQAKEGVTALNRILPRLNLLADDSLADRVDEIRERLDEAQEAARFVQQFGNQLAKLEPIVSVLQSDPEQFEQLKEDYAYSQQMQRDARQQAFALTEVVQRRAHFSYSDSAEMLSGNSDLNEKLRERLEQAEAERTRAREALRGHAAQLSQYNQVLASLKSSYDTKKELLNDLQRELQDIGVRADSGAEERARIRRDELHAQLSNNRSRRNQLEKALTFCEAEMDNLTRKLRKLERDYFEMREQVVTAKAGWCAVMRMVKDNGVERRLHRRELAYLSADDLRSMSDKALGALRLAVADNEHLRDVLRMSEDPKRPERKIQFFVAAYQHLRERIRQDIIRTDDPVEAIEQMEIELSRLTEELTSREQKLVISSRSVANIIRKTIQREQNRIRMLNQGLQNVSFGQVNSVRLNVNVRETHAMLLDVLSEQHEQHQDLFNSNRLTFSEALAKLYQRLNPQIDMGQRTPQTIGEELLDYRNYLEMEVEVNRGSDGWLRAESGALSTGEAIGTGMSILVMVVQSWEDESRRLRGKDISPCRLLFLDEAARLDARSIATLFELCERLQMQLIIAAPENISPEKGTTYKLVRKVFQNTEHVHVVGLRGFAPQLPETLPGTDEAPSQAS.

34–41 is an ATP binding site; it reads GGNGAGKS. Coiled coils occupy residues 326 to 418, 444 to 480, and 509 to 603; these read LEAD…QYNQ, LETF…QAYQ, and RHLA…RAPV. The tract at residues 666–783 is flexible hinge; the sequence is PGGSEDQRLN…EVPLFGRAAR (118 aa). 3 coiled-coil regions span residues 835 to 923, 977 to 1115, and 1209 to 1266; these read EAEI…AKLE, EMLS…TAKA, and VEAI…QNVS.

It belongs to the SMC family. MukB subfamily. Homodimerization via its hinge domain. Binds to DNA via its C-terminal region. Interacts, and probably forms a ternary complex, with MukE and MukF via its C-terminal region. The complex formation is stimulated by calcium or magnesium. Interacts with tubulin-related protein FtsZ.

Its subcellular location is the cytoplasm. It localises to the nucleoid. Plays a central role in chromosome condensation, segregation and cell cycle progression. Functions as a homodimer, which is essential for chromosome partition. Involved in negative DNA supercoiling in vivo, and by this means organize and compact chromosomes. May achieve or facilitate chromosome segregation by condensation DNA from both sides of a centrally located replisome during cell division. The protein is Chromosome partition protein MukB of Shigella boydii serotype 18 (strain CDC 3083-94 / BS512).